The following is an 898-amino-acid chain: Protein translocase subunit SecA (898 aa).

ATP is bound by residues Q87, 105 to 109, and D512; that span reads GEGKT. The segment covering 855–865 has biased composition (polar residues); it reads MQYQNNEGTSS. The tract at residues 855-898 is disordered; that stretch reads MQYQNNEGTSSLHEKSEHKIGRNESCPCGSGKKYKHCHGSKAKY. A compositionally biased stretch (basic and acidic residues) spans 866 to 876; sequence LHEKSEHKIGR. Residues C880, C882, C891, and H892 each coordinate Zn(2+). Basic residues predominate over residues 886 to 898; the sequence is KKYKHCHGSKAKY.

This sequence belongs to the SecA family. Monomer and homodimer. Part of the essential Sec protein translocation apparatus which comprises SecA, SecYEG and auxiliary proteins SecDF-YajC and YidC. Requires Zn(2+) as cofactor.

Its subcellular location is the cell inner membrane. It is found in the cytoplasm. The catalysed reaction is ATP + H2O + cellular proteinSide 1 = ADP + phosphate + cellular proteinSide 2.. In terms of biological role, part of the Sec protein translocase complex. Interacts with the SecYEG preprotein conducting channel. Has a central role in coupling the hydrolysis of ATP to the transfer of proteins into and across the cell membrane, serving both as a receptor for the preprotein-SecB complex and as an ATP-driven molecular motor driving the stepwise translocation of polypeptide chains across the membrane. This chain is Protein translocase subunit SecA, found in Histophilus somni (strain 129Pt) (Haemophilus somnus).